Consider the following 138-residue polypeptide: Transcription antitermination protein NusB (138 aa).

This sequence belongs to the NusB family.

Its function is as follows. Involved in transcription antitermination. Required for transcription of ribosomal RNA (rRNA) genes. Binds specifically to the boxA antiterminator sequence of the ribosomal RNA (rrn) operons. This Colwellia psychrerythraea (strain 34H / ATCC BAA-681) (Vibrio psychroerythus) protein is Transcription antitermination protein NusB.